The following is a 690-amino-acid chain: Elongation factor G (690 aa).

One can recognise a tr-type G domain in the interval 8-283; that stretch reads EDYRNFGIMA…AVVDYLPSPL (276 aa). Residues 17–24, 81–85, and 135–138 contribute to the GTP site; these read AHIDAGKT, DTPGH, and NKMD.

This sequence belongs to the TRAFAC class translation factor GTPase superfamily. Classic translation factor GTPase family. EF-G/EF-2 subfamily.

It is found in the cytoplasm. Its function is as follows. Catalyzes the GTP-dependent ribosomal translocation step during translation elongation. During this step, the ribosome changes from the pre-translocational (PRE) to the post-translocational (POST) state as the newly formed A-site-bound peptidyl-tRNA and P-site-bound deacylated tRNA move to the P and E sites, respectively. Catalyzes the coordinated movement of the two tRNA molecules, the mRNA and conformational changes in the ribosome. This chain is Elongation factor G, found in Bradyrhizobium sp. (strain BTAi1 / ATCC BAA-1182).